Reading from the N-terminus, the 435-residue chain is GTPase Obg (435 aa).

One can recognise an Obg domain in the interval methionine 1–isoleucine 159. In terms of domain architecture, OBG-type G spans alanine 160–phenylalanine 329. GTP contacts are provided by residues glycine 166–serine 173, phenylalanine 191–asparagine 195, aspartate 212–glycine 215, asparagine 282–aspartate 285, and serine 310–leucine 312. The Mg(2+) site is built by serine 173 and threonine 193. The 79-residue stretch at lysine 357 to glutamate 435 folds into the OCT domain.

This sequence belongs to the TRAFAC class OBG-HflX-like GTPase superfamily. OBG GTPase family. As to quaternary structure, monomer. Requires Mg(2+) as cofactor.

Its subcellular location is the cytoplasm. An essential GTPase which binds GTP, GDP and possibly (p)ppGpp with moderate affinity, with high nucleotide exchange rates and a fairly low GTP hydrolysis rate. Plays a role in control of the cell cycle, stress response, ribosome biogenesis and in those bacteria that undergo differentiation, in morphogenesis control. In Ureaplasma parvum serovar 3 (strain ATCC 27815 / 27 / NCTC 11736), this protein is GTPase Obg.